The following is a 37-amino-acid chain: Large ribosomal subunit protein bL36 (37 aa).

This sequence belongs to the bacterial ribosomal protein bL36 family.

The chain is Large ribosomal subunit protein bL36 from Gloeothece citriformis (strain PCC 7424) (Cyanothece sp. (strain PCC 7424)).